Consider the following 542-residue polypeptide: Monocarboxylate transporter 3 (542 aa).

Residues 1 to 19 (MGRADPEEGQLPAPVKPPD) lie on the Cytoplasmic side of the membrane. The chain crosses the membrane as a helical span at residues 20 to 40 (GGWGWIVLFGCFVITGFSYAF). Residues 41-63 (PKAVSVYFKELMKDFHVGYSDTA) are Extracellular-facing. Residues 64–84 (WISSIMLAMLYGTGPVCSIMV) traverse the membrane as a helical segment. Topologically, residues 85–93 (NQFGCRPVM) are cytoplasmic. A helical transmembrane segment spans residues 94–114 (LIGGLLASSGMILASFTTNII). Topologically, residues 115–119 (ELYLT) are extracellular. The helical transmembrane segment at 120-140 (AGVLTGLGMALNFQPSLIMLG) threads the bilayer. Over 141–152 (TYFDKRRPLANG) the chain is Cytoplasmic. Residues 153 to 173 (LAAAGSPVFLSSLSPLGQVLL) traverse the membrane as a helical segment. Residues 174 to 181 (EKFGWRGG) lie on the Extracellular side of the membrane. Residues 182-202 (FLIMGGLLLNCCTCGAVMRPL) traverse the membrane as a helical segment. The Cytoplasmic portion of the chain corresponds to 203–265 (DAGMKRKTEK…LDFSIFSNRG (63 aa)). The segment at 226–247 (GGKSEEGISTTDGTKKTKKAKK) is disordered. A helical membrane pass occupies residues 266 to 286 (FIIYTISKFILVLGLFVPPIL). Residues 287-301 (LVNYAKDTGVPDTEA) are Extracellular-facing. The chain crosses the membrane as a helical span at residues 302–322 (AFLLSIIGFIDIFARPACGMV). Topologically, residues 323–330 (AGLKWVRP) are cytoplasmic. A helical transmembrane segment spans residues 331-351 (HVAYLFSFAMLFNGLTDICSA). Residues 352–357 (RASNYT) lie on the Extracellular side of the membrane. Residues 358–378 (GLVIFCVFFGISYGMVGALQF) form a helical membrane-spanning segment. Residues 379-392 (EVLMAIVGSQKFSS) are Cytoplasmic-facing. The helical transmembrane segment at 393–413 (AIGLVLLIEAFAVLIGPPSAG) threads the bilayer. The Extracellular portion of the chain corresponds to 414–423 (RLVDALKNYE). A helical membrane pass occupies residues 424 to 444 (VIFYLAGSEVVLSALFLAMAT). The Cytoplasmic portion of the chain corresponds to 445–542 (YCCLNRGKKT…ADQTVERDSF (98 aa)). Residues 453–542 (KTPPPEKNPS…ADQTVERDSF (90 aa)) are disordered. Basolateral sorting signal stretches follow at residues 465-510 (GGSD…VEDE) and 511-532 (QSGE…AGCN). Positions 468 to 478 (DTEEAESDVQE) are enriched in acidic residues.

This sequence belongs to the major facilitator superfamily. Monocarboxylate porter (TC 2.A.1.13) family. Retinal pigment epithelium.

The protein localises to the basolateral cell membrane. The enzyme catalyses (S)-lactate(in) + H(+)(in) = (S)-lactate(out) + H(+)(out). Functionally, probable retinal pigment epithelium (RPE)-specific proton-coupled L-lactate transporter. May facilitate transport of lactate and H(+) out of the retina and could therefore play a role in pH and ion homeostasis of the outer retina. This chain is Monocarboxylate transporter 3 (SLC16A8), found in Gallus gallus (Chicken).